The sequence spans 1580 residues: Transcriptional activator GLI3 (1580 aa).

N-acetylmethionine is present on M1. 2 stretches are compositionally biased toward polar residues: residues 1–10 and 58–78; these read MEAQSHSSTT and ITMQ…PSTS. Residues 1-79 form a disordered region; that stretch reads MEAQSHSSTT…KVSEEPSTSS (79 aa). R175 carries the post-translational modification Omega-N-methylarginine. Residues 368 to 475 form a disordered region; the sequence is QSLGSAFGHS…DKDESKQEPE (108 aa). Over residues 401 to 427 the composition is skewed to polar residues; the sequence is NPVQVSSGPSESSQNKPTSESAVSSTG. Glycyl lysine isopeptide (Lys-Gly) (interchain with G-Cter in SUMO2) cross-links involve residues K438 and K462. Basic and acidic residues predominate over residues 461 to 474; sequence VKEEGDKDESKQEP. 5 consecutive C2H2-type zinc fingers follow at residues 480 to 505, 513 to 540, 546 to 570, 576 to 601, and 607 to 632; these read TNCH…NNDH, FVCR…MRRH, HKCT…LRSH, YVCE…NRTH, and YVCK…KTVH. A disordered region spans residues 620–728; that stretch reads DPSSLRKHVK…PISNYSNSGL (109 aa). The span at 632 to 648 shows a compositional bias: basic and acidic residues; it reads HGPEAHVTKKQRGDIHP. Position 664 is a phosphoserine (S664). Positions 684–699 are enriched in basic and acidic residues; the sequence is SKREECLQVKTVKAEK. A compositionally biased stretch (low complexity) spans 703–726; sequence SQPSPGGQSSCSSQQSPISNYSNS. A mediates interaction with DZIP1 region spans residues 745 to 845; the sequence is DETPIMDSTI…VDVTMLNMLN (101 aa). K773 participates in a covalent cross-link: Glycyl lysine isopeptide (Lys-Gly) (interchain with G-Cter in ubiquitin). K779 is covalently cross-linked (Glycyl lysine isopeptide (Lys-Gly) (interchain with G-Cter in SUMO2); alternate). K779 participates in a covalent cross-link: Glycyl lysine isopeptide (Lys-Gly) (interchain with G-Cter in ubiquitin); alternate. Residues K784 and K800 each participate in a glycyl lysine isopeptide (Lys-Gly) (interchain with G-Cter in ubiquitin) cross-link. A phosphoserine; by PKA mark is found at S849, S865, S877, and S907. The span at 863–882 shows a compositional bias: low complexity; the sequence is RSSGISPCFSSRRSSEASQA. The disordered stretch occupies residues 863–918; sequence RSSGISPCFSSRRSSEASQAEGRPQNVSVADSYDPISTDASRRSSEASQSDGLPSL. The segment covering 908–918 has biased composition (polar residues); that stretch reads EASQSDGLPSL. S980 and S1006 each carry phosphoserine; by PKA. A disordered region spans residues 981-1042; the sequence is DGGAHGYGRR…PAMATSAEKR (62 aa).

This sequence belongs to the GLI C2H2-type zinc-finger protein family. As to quaternary structure, the full-length GLI3 form (GLI3FL) interacts with SUFU and this interaction regulates the formation of either repressor or activator forms of GLI3. Its association with SUFU is regulated by Hh signaling and dissociation of the SUFU-GLI3 interaction requires the presence of the ciliary motor KIF3A. Interacts with KIF7. The activator form of GLI3 (GLI3A) but not the repressor form (GLI3R) can interact with TRPS1. The phosphorylated form interacts with BTRC. Interacts with ZIC1. Interacts with ZIC3 (via C2H2-type domains 3, 4 and 5); the interaction enhances its transcriptional activity. Interacts with WRD11; the interaction associates EMX1 with GLI3. Interacts with DZIP1; retains GLI3 within the cytoplasm. Post-translationally, phosphorylated on multiple sites by protein kinase A (PKA) and phosphorylation by PKA primes further phosphorylation by CK1 and GSK3. Phosphorylated by DYRK2 (in vitro). Phosphorylation is essential for its proteolytic processing. In terms of processing, transcriptional repressor GLI3R, a C-terminally truncated form, is generated from the full-length GLI3 protein (GLI3FL/GLI3-190) through proteolytic processing. This process requires PKA-primed phosphorylation of GLI3, ubiquitination of GLI3 and the presence of BTRC. GLI3FL is complexed with SUFU in the cytoplasm and is maintained in a neutral state. Without the Hh signal, the SUFU-GLI3 complex is recruited to cilia, leading to the efficient processing of GLI3FL into GLI3R. GLI3R formation leads to its dissociation from SUFU, allowing it to translocate into the nucleus, and repress Hh target genes. When Hh signaling is initiated, SUFU dissociates from GLI3FL and this has two consequences. First, GLI3R production is halted. Second, free GLI3FL translocates to the nucleus, where it is phosphorylated, destabilized, and converted to a transcriptional activator (GLI3A). Phosphorylated in vitro by ULK3.

It localises to the nucleus. The protein localises to the cytoplasm. The protein resides in the cell projection. Its subcellular location is the cilium. In terms of biological role, has a dual function as a transcriptional activator and a repressor of the sonic hedgehog (Shh) pathway, and plays a role in limb development. The full-length GLI3 form (GLI3FL) after phosphorylation and nuclear translocation, acts as an activator (GLI3A) while GLI3R, its C-terminally truncated form, acts as a repressor. A proper balance between the GLI3 activator and the repressor GLI3R, rather than the repressor gradient itself or the activator/repressor ratio gradient, specifies limb digit number and identity. In concert with TRPS1, plays a role in regulating the size of the zone of distal chondrocytes, in restricting the zone of PTHLH expression in distal cells and in activating chondrocyte proliferation. Binds to the minimal GLI-consensus sequence 5'-GGGTGGTC-3'. Plays a role in limb and brain development. The sequence is that of Transcriptional activator GLI3 (GLI3) from Pan troglodytes (Chimpanzee).